A 629-amino-acid polypeptide reads, in one-letter code: MPSTRNIETHNDSNPTLRALSLSALGIVYGDIGTSPLYTFKTVILLAGGGTPDVTTIMGSASLIIWTLIIIASVKYICFALRIDNDGEGGILALMSLLSLKLKQKPFIIAVGLMGAALIYGDGTITPAISVLSAVEGLEILSPSLKYYVLPIAITILITLFAIQSKGTATIGKAFGPVMAFWFLTIGILGAREVIQHPFVLAAINPVYGLNFLFSNGATGFFILCGVFLCVTGAEALYADLGHFGTAPIRCAWFGLAFPSLIFNYLGQAALVLEGASTEHNIFYMLCPSDFLLPLIILSTVATIIASQAIITGAFSMTRQAMQLGWLPRLRVTQTSSEGYGQIYIGVVNWLLMLATLGLIIGFGSSEKLAAAYGIAVSATMLCTSVLLFIALHKLWKWNIIKSGLVAGLFMIVDASFFAANLTKFINGGYIPITLAIIIYSMMYIWHKGYKTIAIKQKEKNITVDSFLDSIQKEGVVRVPKTAVFLTSKEQDIPPTLVWHVKKNHVLQDKVIILNINNLSIPWCKPGDQLQIVETGAGIWHAVANYGFMEQPHIPKLLKKLETQGYDINIKDITYYIGHETIFVRNVRHTLSKYIKILFVFMHRNALPMSNYFHLPPESVFEIGRQIEI.

A run of 12 helical transmembrane segments spans residues 20–40 (LSLSALGIVYGDIGTSPLYTF), 54–74 (VTTIMGSASLIIWTLIIIASV), 106–126 (PFIIAVGLMGAALIYGDGTIT), 143–163 (PSLKYYVLPIAITILITLFAI), 171–191 (IGKAFGPVMAFWFLTIGILGA), 212–232 (FLFSNGATGFFILCGVFLCVT), 253–273 (WFGLAFPSLIFNYLGQAALVL), 291–311 (FLLPLIILSTVATIIASQAII), 343–363 (IYIGVVNWLLMLATLGLIIGF), 372–392 (AYGIAVSATMLCTSVLLFIAL), 400–420 (IIKSGLVAGLFMIVDASFFAA), and 425–445 (FINGGYIPITLAIIIYSMMYI).

This sequence belongs to the HAK/KUP transporter (TC 2.A.72) family.

It localises to the cell inner membrane. It carries out the reaction K(+)(in) + H(+)(in) = K(+)(out) + H(+)(out). Transport of potassium into the cell. Likely operates as a K(+):H(+) symporter. The protein is Probable potassium transport system protein Kup 3 of Legionella pneumophila (strain Corby).